The sequence spans 413 residues: 1-acylglycerol-3-phosphate O-acyltransferase Pnpla3 (413 aa).

Over 1-42 (MYDPERRWSLSFAGCGFLGFYHVGATLCLSERAPHLLRDART) the chain is Cytoplasmic. A PNPLA domain is found at 10-179 (LSFAGCGFLG…SDNVPVLDAK (170 aa)). The short motif at 14 to 19 (GCGFLG) is the GXGXXG element. A helical; Signal-anchor for type II membrane protein membrane pass occupies residues 43–63 (FFGCSAGALHAVTFVCSLPLG). The GXSXG signature appears at 45–49 (GCSAG). Residue Ser47 is the Nucleophile of the active site. At 64–413 (RIMEILMDLV…HKPQGNSAGL (350 aa)) the chain is on the lumenal side. The Proton acceptor role is filled by Asp166. A DGA/G motif is present at residues 166–168 (DGG). Asn206 and Asn209 each carry an N-linked (GlcNAc...) asparagine glycan. The interval 389-413 (KDDHRMLKHGHHPSPHKPQGNSAGL) is disordered. Over residues 394 to 403 (MLKHGHHPSP) the composition is skewed to basic residues.

As to expression, restricted to adipose tissue. Expressed in inguinal and epididymal white adipose tissues and in interscapular brown adipose tissue. Also expressed in liver in response to high-sucrose diet.

Its subcellular location is the membrane. The protein localises to the lipid droplet. It carries out the reaction a 1-acyl-sn-glycero-3-phosphate + an acyl-CoA = a 1,2-diacyl-sn-glycero-3-phosphate + CoA. The catalysed reaction is a triacylglycerol + H2O = a diacylglycerol + a fatty acid + H(+). The enzyme catalyses a 1-acylglycerol + a 1,3-diacylglycerol = a triacylglycerol + glycerol. It catalyses the reaction a 1-acylglycerol + a 1,2-diacylglycerol = a triacylglycerol + glycerol. It carries out the reaction 2 a 1-acylglycerol = a 1,2-diacylglycerol + glycerol. The catalysed reaction is 1-(9Z-octadecenoyl)-sn-glycero-3-phosphate + (9Z)-octadecenoyl-CoA = 1,2-di-(9Z-octadecenoyl)-sn-glycero-3-phosphate + CoA. The enzyme catalyses 1-(9Z-octadecenoyl)-sn-glycero-3-phosphate + hexadecanoyl-CoA = 1-(9Z)-octadecenoyl-2-hexadecanoyl-sn-glycero-3-phosphate + CoA. It catalyses the reaction 1-(9Z-octadecenoyl)-sn-glycero-3-phosphate + (9Z,12Z)-octadecadienoyl-CoA = 1-(9Z)-octadecenoyl-2-(9Z,12Z)-octadecadienoyl-sn-glycero-3-phosphate + CoA. It carries out the reaction 1-(9Z-octadecenoyl)-sn-glycero-3-phosphate + (5Z,8Z,11Z,14Z)-eicosatetraenoyl-CoA = 1-(9Z)-octadecenoyl-2-(5Z,8Z,11Z,14Z)-eicosatetraenoyl-sn-glycero-3-phosphate + CoA. The catalysed reaction is 2 1-(9Z-octadecenoyl)-glycerol = 1,2-di-(9Z-octadecenoyl)-glycerol + glycerol. The enzyme catalyses 1-(9Z-octadecenoyl)-glycerol + 1,2-di-(9Z-octadecenoyl)-glycerol = 1,2,3-tri-(9Z-octadecenoyl)-glycerol + glycerol. It catalyses the reaction 1-(9Z-octadecenoyl)-glycerol + 1,3-di-(9Z-octadecenoyl)-glycerol = 1,2,3-tri-(9Z-octadecenoyl)-glycerol + glycerol. It carries out the reaction 1,2,3-tri-(9Z-octadecenoyl)-glycerol + H2O = 1,3-di-(9Z-octadecenoyl)-glycerol + (9Z)-octadecenoate + H(+). The catalysed reaction is a 1,2-diacyl-sn-glycero-3-phosphocholine + H2O = a 1-acyl-sn-glycero-3-phosphocholine + a fatty acid + H(+). It participates in phospholipid metabolism. Its pathway is glycerolipid metabolism. In terms of biological role, specifically catalyzes coenzyme A (CoA)-dependent acylation of 1-acyl-sn-glycerol 3-phosphate (2-lysophosphatidic acid/LPA) to generate phosphatidic acid (PA), an important metabolic intermediate and precursor for both triglycerides and glycerophospholipids. Does not esterify other lysophospholipids. Acyl donors are long chain (at least C16) fatty acyl-CoAs: arachidonoyl-CoA, linoleoyl-CoA, oleoyl-CoA and at a lesser extent palmitoyl-CoA. Additionally possesses low triacylglycerol lipase and CoA-independent acylglycerol transacylase activities and thus may play a role in acyl-chain remodeling of triglycerides. In vitro may express hydrolytic activity against glycerolipids triacylglycerol, diacylglycerol and monoacylglycerol, with a strong preference for oleic acid as the acyl moiety. However, the triacylglycerol hydrolase activity is controversial and may be very low. Possesses phospholipase A2 activity. In Mus musculus (Mouse), this protein is 1-acylglycerol-3-phosphate O-acyltransferase Pnpla3.